The following is a 215-amino-acid chain: Calcium-binding protein 7 (215 aa).

Over Met-1 to Ser-188 the chain is Cytoplasmic. EF-hand domains lie at Asp-33 to Met-68 and Pro-69 to Thr-104. Ca(2+) is bound by residues Asp-46, Asp-48, Asn-50, Glu-57, Asp-82, Asp-84, Asp-86, Gln-88, and Glu-93. The helical; Anchor for type IV membrane protein transmembrane segment at Leu-189–Val-209 threads the bilayer. At Leu-210–Lys-215 the chain is on the extracellular side.

Interacts with PI4KB. This binding competes with FREQ/NCS1 binding in a calcium-dependent manner.

It is found in the golgi apparatus. The protein resides in the trans-Golgi network membrane. The protein localises to the cytoplasm. Its subcellular location is the perinuclear region. It localises to the cell membrane. In terms of biological role, negatively regulates Golgi-to-plasma membrane trafficking by interacting with PI4KB and inhibiting its activity. The chain is Calcium-binding protein 7 (CABP7) from Homo sapiens (Human).